Reading from the N-terminus, the 631-residue chain is Phosphomethylpyrimidine synthase (631 aa).

Residues Asn239, Met268, Tyr297, His333, 353–355 (SRG), 394–397 (DGLR), and Glu433 contribute to the substrate site. His437 contacts Zn(2+). Tyr460 contributes to the substrate binding site. His501 provides a ligand contact to Zn(2+). [4Fe-4S] cluster is bound by residues Cys581, Cys584, and Cys589.

It belongs to the ThiC family. In terms of assembly, homodimer. [4Fe-4S] cluster serves as cofactor.

The catalysed reaction is 5-amino-1-(5-phospho-beta-D-ribosyl)imidazole + S-adenosyl-L-methionine = 4-amino-2-methyl-5-(phosphooxymethyl)pyrimidine + CO + 5'-deoxyadenosine + formate + L-methionine + 3 H(+). The protein operates within cofactor biosynthesis; thiamine diphosphate biosynthesis. Functionally, catalyzes the synthesis of the hydroxymethylpyrimidine phosphate (HMP-P) moiety of thiamine from aminoimidazole ribotide (AIR) in a radical S-adenosyl-L-methionine (SAM)-dependent reaction. This chain is Phosphomethylpyrimidine synthase, found in Escherichia coli O139:H28 (strain E24377A / ETEC).